Here is a 440-residue protein sequence, read N- to C-terminus: Chromosome partition protein MukF (440 aa).

A leucine-zipper region spans residues 208–236; it reads LSETSGTLRELQDTLEAAGDKLQANLLRI.

The protein belongs to the MukF family. Interacts, and probably forms a ternary complex, with MukE and MukB via its C-terminal region. The complex formation is stimulated by calcium or magnesium. It is required for an interaction between MukE and MukB.

It is found in the cytoplasm. Its subcellular location is the nucleoid. Involved in chromosome condensation, segregation and cell cycle progression. May participate in facilitating chromosome segregation by condensation DNA from both sides of a centrally located replisome during cell division. Not required for mini-F plasmid partitioning. Probably acts via its interaction with MukB and MukE. Overexpression results in anucleate cells. It has a calcium binding activity. The polypeptide is Chromosome partition protein MukF (Citrobacter koseri (strain ATCC BAA-895 / CDC 4225-83 / SGSC4696)).